The chain runs to 303 residues: Sulfate adenylyltransferase subunit 2 (303 aa).

Belongs to the PAPS reductase family. CysD subfamily. In terms of assembly, heterodimer composed of CysD, the smaller subunit, and CysN.

It catalyses the reaction sulfate + ATP + H(+) = adenosine 5'-phosphosulfate + diphosphate. Its pathway is sulfur metabolism; hydrogen sulfide biosynthesis; sulfite from sulfate: step 1/3. In terms of biological role, with CysN forms the ATP sulfurylase (ATPS) that catalyzes the adenylation of sulfate producing adenosine 5'-phosphosulfate (APS) and diphosphate, the first enzymatic step in sulfur assimilation pathway. APS synthesis involves the formation of a high-energy phosphoric-sulfuric acid anhydride bond driven by GTP hydrolysis by CysN coupled to ATP hydrolysis by CysD. The polypeptide is Sulfate adenylyltransferase subunit 2 (Bacteroides fragilis (strain YCH46)).